Here is a 402-residue protein sequence, read N- to C-terminus: Nicotinate phosphoribosyltransferase (402 aa).

A Phosphohistidine; by autocatalysis modification is found at H221.

This sequence belongs to the NAPRTase family. Transiently phosphorylated on a His residue during the reaction cycle. Phosphorylation strongly increases the affinity for substrates and increases the rate of nicotinate D-ribonucleotide production. Dephosphorylation regenerates the low-affinity form of the enzyme, leading to product release.

It carries out the reaction nicotinate + 5-phospho-alpha-D-ribose 1-diphosphate + ATP + H2O = nicotinate beta-D-ribonucleotide + ADP + phosphate + diphosphate. The protein operates within cofactor biosynthesis; NAD(+) biosynthesis; nicotinate D-ribonucleotide from nicotinate: step 1/1. Its function is as follows. Catalyzes the synthesis of beta-nicotinate D-ribonucleotide from nicotinate and 5-phospho-D-ribose 1-phosphate at the expense of ATP. The sequence is that of Nicotinate phosphoribosyltransferase from Sodalis glossinidius (strain morsitans).